The sequence spans 666 residues: tRNA 5-methylaminomethyl-2-thiouridine biosynthesis bifunctional protein MnmC (666 aa).

Positions 1–253 (MSSPFAPIIT…KRHMLCAYYE (253 aa)) are tRNA (mnm(5)s(2)U34)-methyltransferase. Residues 283–666 (VGGGLAGCFI…FLRKKIIQGP (384 aa)) form an FAD-dependent cmnm(5)s(2)U34 oxidoreductase region.

It in the N-terminal section; belongs to the methyltransferase superfamily. tRNA (mnm(5)s(2)U34)-methyltransferase family. This sequence in the C-terminal section; belongs to the DAO family. FAD is required as a cofactor.

It is found in the cytoplasm. It catalyses the reaction 5-aminomethyl-2-thiouridine(34) in tRNA + S-adenosyl-L-methionine = 5-methylaminomethyl-2-thiouridine(34) in tRNA + S-adenosyl-L-homocysteine + H(+). Catalyzes the last two steps in the biosynthesis of 5-methylaminomethyl-2-thiouridine (mnm(5)s(2)U) at the wobble position (U34) in tRNA. Catalyzes the FAD-dependent demodification of cmnm(5)s(2)U34 to nm(5)s(2)U34, followed by the transfer of a methyl group from S-adenosyl-L-methionine to nm(5)s(2)U34, to form mnm(5)s(2)U34. This Legionella pneumophila (strain Corby) protein is tRNA 5-methylaminomethyl-2-thiouridine biosynthesis bifunctional protein MnmC.